Consider the following 147-residue polypeptide: Interleukin-4 (147 aa).

The first 24 residues, 1 to 24 (MGLPAQLPVTLLCLLAGTAHFIQG), serve as a signal peptide directing secretion. A disulfide bridge links C48 with C88. An N-linked (GlcNAc...) asparagine glycan is attached at N62.

Belongs to the IL-4/IL-13 family.

The protein resides in the secreted. Functionally, participates in at least several B-cell activation processes as well as of other cell types. It is a costimulator of DNA-synthesis. It induces the expression of class II MHC molecules on resting B-cells. It enhances both secretion and cell surface expression of IgE and IgG1. It also regulates the expression of the low affinity Fc receptor for IgE (CD23) on both lymphocytes and monocytes. Positively regulates IL31RA expression in macrophages. Stimulates autophagy in dendritic cells by interfering with mTORC1 signaling and through the induction of RUFY4. This is Interleukin-4 (IL4) from Oryctolagus cuniculus (Rabbit).